The sequence spans 510 residues: Pre-glycoprotein polyprotein GP complex (510 aa).

Residue Gly-2 is the site of N-myristoyl glycine; by host attachment. Over 2 to 17 the chain is Extracellular; it reads GQFITLMQSIPEALNM. Residues 18 to 32 form a helical membrane-spanning segment; sequence AFNVALVIVSLLCVT. Residue Lys-33 is a topological domain, cytoplasmic. A helical transmembrane segment spans residues 34 to 53; that stretch reads GLINLWKCGIIQLLMFLALA. Extracellular loops occupy residues 54–58 and 59–448; these read GRSCD and GEYK…ALAD. Zn(2+) is bound at residue Cys-57. N-linked (GlcNAc...) asparagine; by host glycosylation is found at Asn-75, Asn-90, Asn-101, Asn-112, Asn-117, Asn-122, Asn-133, Asn-182, Asn-218, and Asn-243. Intrachain disulfides connect Cys-87/Cys-250, Cys-295/Cys-308, Cys-317/Cys-326, and Cys-380/Cys-401. 4 N-linked (GlcNAc...) asparagine; by host glycosylation sites follow: Asn-381, Asn-389, Asn-406, and Asn-411. Residues 449-469 traverse the membrane as a helical segment; sequence LCFWSLVFFTTTVFFQLIGIP. Topologically, residues 470-510 are cytoplasmic; sequence THRHLIGEGCPKPHRLTSNSLCSCGFYKIPKKPFRWVRKGK. Residues His-471, His-473, Cys-479, His-483, Cys-491, and Cys-493 each coordinate Zn(2+).

This sequence belongs to the arenaviridae GPC protein family. Homotetramer; disulfide-linked. As to quaternary structure, homotetramer. GP2 homotetramers bind through ionic interactions with GP1 homotetramers to form the GP complex together with the stable signal peptide. The GP-C polyprotein interacts with the host protease MBTPS1/SKI-1 resulting in the polyprotein processing. Specific enzymatic cleavages in vivo yield mature proteins. GP-C polyprotein is cleaved in the endoplasmic reticulum by the host protease MBTPS1. Only cleaved glycoprotein is incorporated into virions. In terms of processing, the SSP remains stably associated with the GP complex following cleavage by signal peptidase and plays crucial roles in the trafficking of GP through the secretory pathway. Post-translationally, myristoylation is necessary for GP2-mediated fusion activity.

It localises to the virion membrane. Its subcellular location is the host endoplasmic reticulum membrane. It is found in the host Golgi apparatus membrane. The protein resides in the host cell membrane. Functionally, class I viral fusion protein that directs fusion of viral and host endosomal membranes, leading to delivery of the nucleocapsid into the cytoplasm. Membrane fusion is mediated by irreversible conformational changes induced upon acidification in the endosome. Stable signal peptide (SSP): cleaved and functions as a signal peptide. In addition, it is also retained as the third component of the GP complex. The SSP is required for efficient glycoprotein expression, post-translational maturation cleavage of GP1 and GP2, glycoprotein transport to the cell surface plasma membrane, formation of infectious virus particles, and acid pH-dependent glycoprotein-mediated cell fusion. Its function is as follows. Interacts with the host receptor. The polypeptide is Pre-glycoprotein polyprotein GP complex (Pirital mammarenavirus (isolate Rat/Venezuela/VAV-488/1995) (PIRV)).